A 351-amino-acid polypeptide reads, in one-letter code: Putative F-box protein At5g52610 (351 aa).

The F-box domain occupies 1–41 (MISEDLLVEILLRLPVKPLARCLCVCKLWATIIRSRYFINL).

In Arabidopsis thaliana (Mouse-ear cress), this protein is Putative F-box protein At5g52610.